Here is a 407-residue protein sequence, read N- to C-terminus: Peptidase T (407 aa).

His78 provides a ligand contact to Zn(2+). The active site involves Asp80. Asp139 serves as a coordination point for Zn(2+). The Proton acceptor role is filled by Glu173. The Zn(2+) site is built by Glu174, Asp196, and His378.

It belongs to the peptidase M20B family. Zn(2+) serves as cofactor.

Its subcellular location is the cytoplasm. The catalysed reaction is Release of the N-terminal residue from a tripeptide.. In terms of biological role, cleaves the N-terminal amino acid of tripeptides. The polypeptide is Peptidase T (Shewanella halifaxensis (strain HAW-EB4)).